Reading from the N-terminus, the 362-residue chain is Phosphoserine aminotransferase (362 aa).

Positions 9 and 42 each coordinate L-glutamate. Pyridoxal 5'-phosphate-binding positions include 76 to 77 (GR), tryptophan 102, threonine 153, aspartate 174, and glutamine 197. N6-(pyridoxal phosphate)lysine is present on lysine 198. 239–240 (NT) is a pyridoxal 5'-phosphate binding site.

Belongs to the class-V pyridoxal-phosphate-dependent aminotransferase family. SerC subfamily. In terms of assembly, homodimer. The cofactor is pyridoxal 5'-phosphate.

It is found in the cytoplasm. The enzyme catalyses O-phospho-L-serine + 2-oxoglutarate = 3-phosphooxypyruvate + L-glutamate. It carries out the reaction 4-(phosphooxy)-L-threonine + 2-oxoglutarate = (R)-3-hydroxy-2-oxo-4-phosphooxybutanoate + L-glutamate. The protein operates within amino-acid biosynthesis; L-serine biosynthesis; L-serine from 3-phospho-D-glycerate: step 2/3. It functions in the pathway cofactor biosynthesis; pyridoxine 5'-phosphate biosynthesis; pyridoxine 5'-phosphate from D-erythrose 4-phosphate: step 3/5. Its function is as follows. Catalyzes the reversible conversion of 3-phosphohydroxypyruvate to phosphoserine and of 3-hydroxy-2-oxo-4-phosphonooxybutanoate to phosphohydroxythreonine. The sequence is that of Phosphoserine aminotransferase from Salmonella agona (strain SL483).